An 800-amino-acid chain; its full sequence is Elongation factor G, mitochondrial (800 aa).

The N-terminal 34 residues, methionine 1 to tyrosine 34, are a transit peptide targeting the mitochondrion. The tr-type G domain maps to serine 99–alanine 385. Residues alanine 108–threonine 115, aspartate 183–histidine 187, and asparagine 237–aspartate 240 each bind GTP.

The protein belongs to the TRAFAC class translation factor GTPase superfamily. Classic translation factor GTPase family. EF-G/EF-2 subfamily.

The protein localises to the mitochondrion. Its pathway is protein biosynthesis; polypeptide chain elongation. Mitochondrial GTPase that catalyzes the GTP-dependent ribosomal translocation step during translation elongation. During this step, the ribosome changes from the pre-translocational (PRE) to the post-translocational (POST) state as the newly formed A-site-bound peptidyl-tRNA and P-site-bound deacylated tRNA move to the P and E sites, respectively. Catalyzes the coordinated movement of the two tRNA molecules, the mRNA and conformational changes in the ribosome. This Coccidioides immitis (strain RS) (Valley fever fungus) protein is Elongation factor G, mitochondrial.